We begin with the raw amino-acid sequence, 159 residues long: NADH dehydrogenase [ubiquinone] 1 beta subcomplex subunit 10 (159 aa).

It belongs to the complex I NDUFB10 subunit family. In terms of assembly, complex I is composed of 45 different subunits.

Its subcellular location is the mitochondrion inner membrane. Its function is as follows. Accessory subunit of the mitochondrial membrane respiratory chain NADH dehydrogenase (Complex I), that is believed not to be involved in catalysis. Complex I functions in the transfer of electrons from NADH to the respiratory chain. The immediate electron acceptor for the enzyme is believed to be ubiquinone. This Bombyx mori (Silk moth) protein is NADH dehydrogenase [ubiquinone] 1 beta subcomplex subunit 10.